Consider the following 95-residue polypeptide: uncharacterized protein (95 aa).

Residues 46-68 are disordered; it reads GDRGTNGRTEAEHDGIPHSRKKV.

This is an uncharacterized protein from Schizosaccharomyces pombe (strain 972 / ATCC 24843) (Fission yeast).